The chain runs to 440 residues: Trigger factor (440 aa).

The region spanning 162–247 (GDRVTFDFTG…LKKIEKFQLP (86 aa)) is the PPIase FKBP-type domain.

It belongs to the FKBP-type PPIase family. Tig subfamily.

It is found in the cytoplasm. It catalyses the reaction [protein]-peptidylproline (omega=180) = [protein]-peptidylproline (omega=0). In terms of biological role, involved in protein export. Acts as a chaperone by maintaining the newly synthesized protein in an open conformation. Functions as a peptidyl-prolyl cis-trans isomerase. The protein is Trigger factor of Hamiltonella defensa subsp. Acyrthosiphon pisum (strain 5AT).